The primary structure comprises 141 residues: Auxin-responsive protein SAUR63 (141 aa).

It belongs to the ARG7 family. In terms of tissue distribution, expressed in hypocotyls, cotyledons, petioles, young rosette leaves, apical portion of inflorescence stems, stamen filaments and petals.

The protein localises to the cell membrane. Its function is as follows. May promote auxin-stimulated organ elongation, such as hypocotyls, stamen filaments and petals. This chain is Auxin-responsive protein SAUR63, found in Arabidopsis thaliana (Mouse-ear cress).